The primary structure comprises 494 residues: Flagellin A (494 aa).

The protein belongs to the bacterial flagellin family. In terms of assembly, heteromer of FlaA and FlaB. FlaB is located proximal to the hook while the remainder of the filament is composed of the predominant FlaA.

Its subcellular location is the secreted. It localises to the bacterial flagellum. Its function is as follows. Flagellin is the subunit protein which polymerizes to form the filaments of bacterial flagella. Important for motility and virulence. This chain is Flagellin A (flaA), found in Helicobacter mustelae.